We begin with the raw amino-acid sequence, 425 residues long: MFVDQVKVYVKGGDGGNGAVSFRREKYVPLGGPAGGDGGQGGDVVFVVDEGLRTLVDFRYQRHFKAPRGEHGRNKSQHGAGAEDMVVRVPPGTTVIDDDTKEVIADLVEQGQRAVIAKGGRGGRGNNRFANSSNPAPHISENGEPGQERYIVMELKLIADVGLVGYPSVGKSTLLSSVTAAKPKIAAYHFTTLTPNLGVVDLGERSFVMADLPGLIEGAHEGVGLGHQFLRHVERTRLIVHVIDMAAVDGRDPYEDYLQINRELTLYNLKLEDRPQIVVANKMELPEAEENLRIFKEKAPDVKVYEISAATSKGVQELMYAIGDTLATIPDKPAVEEVAEVEERVVFRAEKEPDAFEITRDNEVFVVSGEKIEKLVRMTNLNSYDAAQRFARQMRSMGVDDALRKLGAKDGDTVRIGKLEFDFVE.

Residues 1 to 158 (MFVDQVKVYV…RYIVMELKLI (158 aa)) form the Obg domain. Residues 118–144 (KGGRGGRGNNRFANSSNPAPHISENGE) form a disordered region. Positions 159–327 (ADVGLVGYPS…LMYAIGDTLA (169 aa)) constitute an OBG-type G domain. Residues 165 to 172 (GYPSVGKS), 190 to 194 (FTTLT), 211 to 214 (DLPG), 281 to 284 (NKME), and 308 to 310 (SAA) contribute to the ATP site. Residues serine 172 and threonine 192 each coordinate Mg(2+). The OCT domain occupies 348–425 (RAEKEPDAFE…IGKLEFDFVE (78 aa)).

The protein belongs to the TRAFAC class OBG-HflX-like GTPase superfamily. OBG GTPase family. As to quaternary structure, monomer. It depends on Mg(2+) as a cofactor.

Its subcellular location is the cytoplasm. In terms of biological role, an essential GTPase which binds GTP, GDP and possibly (p)ppGpp with moderate affinity, with high nucleotide exchange rates and a fairly low GTP hydrolysis rate. Plays a role in control of the cell cycle, stress response, ribosome biogenesis and in those bacteria that undergo differentiation, in morphogenesis control. The protein is GTPase Obg of Brevibacillus brevis (strain 47 / JCM 6285 / NBRC 100599).